A 145-amino-acid polypeptide reads, in one-letter code: Transcriptional regulator MraZ (145 aa).

2 consecutive SpoVT-AbrB domains span residues T5–Q50 and A81–A124.

This sequence belongs to the MraZ family. In terms of assembly, forms oligomers.

It is found in the cytoplasm. The protein resides in the nucleoid. This chain is Transcriptional regulator MraZ, found in Anaeromyxobacter sp. (strain Fw109-5).